Here is a 254-residue protein sequence, read N- to C-terminus: Geranylgeranylglyceryl phosphate synthase (254 aa).

Mg(2+) is bound by residues Asp28 and Ser53. Sn-glycerol 1-phosphate-binding positions include 172-178 (YLEAGSG), 203-204 (GG), and 225-226 (GT).

The protein belongs to the GGGP/HepGP synthase family. Group II subfamily. It depends on Mg(2+) as a cofactor.

The protein resides in the cytoplasm. The catalysed reaction is sn-glycerol 1-phosphate + (2E,6E,10E)-geranylgeranyl diphosphate = sn-3-O-(geranylgeranyl)glycerol 1-phosphate + diphosphate. The protein operates within membrane lipid metabolism; glycerophospholipid metabolism. Its function is as follows. Prenyltransferase that catalyzes the transfer of the geranylgeranyl moiety of geranylgeranyl diphosphate (GGPP) to the C3 hydroxyl of sn-glycerol-1-phosphate (G1P). This reaction is the first ether-bond-formation step in the biosynthesis of archaeal membrane lipids. The sequence is that of Geranylgeranylglyceryl phosphate synthase from Methanococcus vannielii (strain ATCC 35089 / DSM 1224 / JCM 13029 / OCM 148 / SB).